The following is an 82-amino-acid chain: Large ribosomal subunit protein bL27 (82 aa).

The interval 1–20 (MAHKKGASSSRNGRDSNPQY) is disordered. The segment covering 7-19 (ASSSRNGRDSNPQ) has biased composition (polar residues).

The protein belongs to the bacterial ribosomal protein bL27 family.

The polypeptide is Large ribosomal subunit protein bL27 (Bifidobacterium longum (strain NCC 2705)).